Here is a 359-residue protein sequence, read N- to C-terminus: Molybdenum import ATP-binding protein ModC (359 aa).

Residues 1–233 enclose the ABC transporter domain; the sequence is MSGLTVSIRG…IDAESEGGGV (233 aa). 32 to 39 serves as a coordination point for ATP; sequence GHSGAGKT. The Mop domain occupies 289–355; sequence AISIRNLLPV…VKAVSVDRAA (67 aa).

It belongs to the ABC transporter superfamily. Molybdate importer (TC 3.A.1.8) family. As to quaternary structure, the complex is composed of two ATP-binding proteins (ModC), two transmembrane proteins (ModB) and a solute-binding protein (ModA).

It is found in the cell inner membrane. The catalysed reaction is molybdate(out) + ATP + H2O = molybdate(in) + ADP + phosphate + H(+). Its function is as follows. Part of the ABC transporter complex ModABC involved in molybdenum import. Responsible for energy coupling to the transport system. In Brucella suis biovar 1 (strain 1330), this protein is Molybdenum import ATP-binding protein ModC.